The following is a 227-amino-acid chain: Uracil-DNA glycosylase (227 aa).

Residue D65 is the Proton acceptor of the active site.

The protein belongs to the uracil-DNA glycosylase (UDG) superfamily. UNG family.

Its subcellular location is the cytoplasm. The catalysed reaction is Hydrolyzes single-stranded DNA or mismatched double-stranded DNA and polynucleotides, releasing free uracil.. Excises uracil residues from the DNA which can arise as a result of misincorporation of dUMP residues by DNA polymerase or due to deamination of cytosine. This chain is Uracil-DNA glycosylase, found in Lactobacillus delbrueckii subsp. bulgaricus (strain ATCC 11842 / DSM 20081 / BCRC 10696 / JCM 1002 / NBRC 13953 / NCIMB 11778 / NCTC 12712 / WDCM 00102 / Lb 14).